Reading from the N-terminus, the 351-residue chain is Phosphoribosylformylglycinamidine cyclo-ligase (351 aa).

Belongs to the AIR synthase family.

The protein resides in the cytoplasm. The catalysed reaction is 2-formamido-N(1)-(5-O-phospho-beta-D-ribosyl)acetamidine + ATP = 5-amino-1-(5-phospho-beta-D-ribosyl)imidazole + ADP + phosphate + H(+). It functions in the pathway purine metabolism; IMP biosynthesis via de novo pathway; 5-amino-1-(5-phospho-D-ribosyl)imidazole from N(2)-formyl-N(1)-(5-phospho-D-ribosyl)glycinamide: step 2/2. The protein is Phosphoribosylformylglycinamidine cyclo-ligase of Lysinibacillus sphaericus (strain C3-41).